We begin with the raw amino-acid sequence, 438 residues long: Probable glucose-6-phosphate isomerase (438 aa).

The active-site Proton donor is the Glu280. Active-site residues include His301 and Lys410.

It belongs to the GPI family.

The protein resides in the cytoplasm. It catalyses the reaction alpha-D-glucose 6-phosphate = beta-D-fructose 6-phosphate. The protein operates within carbohydrate biosynthesis; gluconeogenesis. It functions in the pathway carbohydrate degradation; glycolysis; D-glyceraldehyde 3-phosphate and glycerone phosphate from D-glucose: step 2/4. Functionally, catalyzes the reversible isomerization of glucose-6-phosphate to fructose-6-phosphate. The sequence is that of Probable glucose-6-phosphate isomerase from Methanococcus maripaludis (strain DSM 14266 / JCM 13030 / NBRC 101832 / S2 / LL).